Reading from the N-terminus, the 123-residue chain is Small ribosomal subunit protein uS12 (123 aa).

A 3-methylthioaspartic acid modification is found at D89.

The protein belongs to the universal ribosomal protein uS12 family. In terms of assembly, part of the 30S ribosomal subunit. Contacts proteins S8 and S17. May interact with IF1 in the 30S initiation complex.

With S4 and S5 plays an important role in translational accuracy. Functionally, interacts with and stabilizes bases of the 16S rRNA that are involved in tRNA selection in the A site and with the mRNA backbone. Located at the interface of the 30S and 50S subunits, it traverses the body of the 30S subunit contacting proteins on the other side and probably holding the rRNA structure together. The combined cluster of proteins S8, S12 and S17 appears to hold together the shoulder and platform of the 30S subunit. This Chelativorans sp. (strain BNC1) protein is Small ribosomal subunit protein uS12.